The chain runs to 152 residues: Small ribosomal subunit protein uS11 (152 aa).

It belongs to the universal ribosomal protein uS11 family. Component of the small ribosomal subunit. Part of the small subunit (SSU) processome, composed of more than 70 proteins and the RNA chaperone small nucleolar RNA (snoRNA) U3.

It is found in the cytoplasm. The protein resides in the nucleus. The protein localises to the nucleolus. Component of the small ribosomal subunit. The ribosome is a large ribonucleoprotein complex responsible for the synthesis of proteins in the cell. Part of the small subunit (SSU) processome, first precursor of the small eukaryotic ribosomal subunit. During the assembly of the SSU processome in the nucleolus, many ribosome biogenesis factors, an RNA chaperone and ribosomal proteins associate with the nascent pre-rRNA and work in concert to generate RNA folding, modifications, rearrangements and cleavage as well as targeted degradation of pre-ribosomal RNA by the RNA exosome. This is Small ribosomal subunit protein uS11 (rps-14) from Caenorhabditis elegans.